The sequence spans 253 residues: Ras-like protein family member 11A-like (253 aa).

GTP contacts are provided by residues 43–50 (GASNVGKT), 90–97 (DTPCVSLQ), and 157–160 (NKSD). The tract at residues 213-233 (GNGEKRKGGLHLARPKSPNMQ) is disordered.

Belongs to the small GTPase superfamily. Ras family.

It is found in the nucleus. The protein resides in the nucleolus. The enzyme catalyses GTP + H2O = GDP + phosphate + H(+). In terms of biological role, regulator of rDNA transcription. The sequence is that of Ras-like protein family member 11A-like from Danio rerio (Zebrafish).